The following is a 715-amino-acid chain: Integrator complex subunit 13 (715 aa).

Disordered regions lie at residues 572-612 and 626-659; these read KPPE…SERI and AEVI…SKGP. Positions 581 to 591 match the Nuclear localization signal (NLS) motif; the sequence is KRGRKREDKEE. The tract at residues 658–703 is cleavage module binding motif (CMBM); that stretch reads GPMSLLSLWSSRINTANSRKHQEFVGRLNSVNNKAELYQHLKEENG.

The protein belongs to the Integrator subunit 13 family. In terms of assembly, component of the Integrator complex, composed of core subunits INTS1, INTS2, INTS3, INTS4, INTS5, INTS6, INTS7, INTS8, INTS9/RC74, INTS10, INTS11/CPSF3L, INTS12, INTS13, INTS14 and INTS15. The core complex associates with protein phosphatase 2A subunits PPP2CA and PPP2R1A, to form the Integrator-PP2A (INTAC) complex. INTS13 is part of the tail subcomplex, composed of INTS10, INTS13, INTS14 and INTS15.

The protein resides in the nucleus. It is found in the cytoplasm. Its function is as follows. Component of the integrator complex, a multiprotein complex that terminates RNA polymerase II (Pol II) transcription in the promoter-proximal region of genes. The integrator complex provides a quality checkpoint during transcription elongation by driving premature transcription termination of transcripts that are unfavorably configured for transcriptional elongation: the complex terminates transcription by (1) catalyzing dephosphorylation of the C-terminal domain (CTD) of Pol II subunit POLR2A/RPB1 and SUPT5H/SPT5, (2) degrading the exiting nascent RNA transcript via endonuclease activity and (3) promoting the release of Pol II from bound DNA. The integrator complex is also involved in terminating the synthesis of non-coding Pol II transcripts, such as enhancer RNAs (eRNAs), small nuclear RNAs (snRNAs), telomerase RNAs and long non-coding RNAs (lncRNAs). Within the integrator complex, INTS13 is part of the integrator tail module and acts as a platform for the recruitment of transcription factors at promoters. Plays a role in gastrulation and early embryogenesis. The protein is Integrator complex subunit 13 of Xenopus laevis (African clawed frog).